The chain runs to 69 residues: Atypical cationic antimicrobial peptide (69 aa).

An N-terminal signal peptide occupies residues 1–22; it reads MAFLKKSLFLVLFLGLVSLSIC. Positions 23-45 are excised as a propeptide; the sequence is DEEKRENEDEENQEDDEQSEMRR. Residues 25-45 are disordered; it reads EKRENEDEENQEDDEQSEMRR. Residues 30–40 show a composition bias toward acidic residues; the sequence is EDEENQEDDEQ.

Belongs to the frog skin active peptide (FSAP) family. As to quaternary structure, monomer and/or weakly self-associated, oligomer, and amyloid-like fibril. Can adopt a monomeric nonamphipathic alpha-helical conformation, possibly with the aid of its cationic N- and C-termini, when bound to anionic membranes. Forms stable and ordered beta-sheet aggregates in aqueous environment or when bound to anionic or zwitterionic phospholipid vesicles. As to expression, expressed by the skin glands.

The protein resides in the secreted. Its subcellular location is the target cell membrane. Functionally, atypical cationic antimicrobial peptide with potent activity against Gram-negative and Gram-positive bacteria. Acts by inducing permeabilization of bacterial membrane. In vitro, also shows chemoattractant activity, which is mediated through a G protein-coupled receptor (probably FPR2 coupled to the ERK1/2 MAPK kinase pathway). Has slow-kinetic self-association and amyloid-like properties that modulate its activity. The soluble, weakly self-associated forms act on leukocytes to promote chemotaxis but have low antibacterial activity, the oligomers exhibit potent antimicrobial activity, whereas the amyloid-like fibrils have a very weak antibacterial activity. The membrane composition has a great influence on the peptide behavior. The peptide induces membrane leakage and insertion to a lesser extent in model membranes of the anionic lipid phosphatidylglycerol (PG) than in the model membranes of the zwitterionic lipid phosphatidylcholine (PC) vesicles. It forms more fibrils in PC than in PG. Membrane perturbations are more observed in the presence of PG than in the presence of PC. The peptide shows low hemolytic activity. The chain is Atypical cationic antimicrobial peptide from Phyllomedusa sauvagei (Sauvage's leaf frog).